A 313-amino-acid chain; its full sequence is MTQLGFLLFIMVATRGCSAAEENLDTNRWGNSFFSSLPRSCKEIKQEHTKAQDGLYFLRTKNGVIYQTFCDMTTAGGGWTLVASVHENNMRGKCTVGDRWSSQQGNRADYPEGDGNWANYNTFGSAEAATSDDYKNPGYFDIQAENLGIWHVPNKSPLHNWRKSSLLRYRTFTGFLQHLGHNLFGLYKKYPVKYGEGKCWTDNGPALPVVYDFGDARKTASYYSPSGQREFTAGYVQFRVFNNERAASALCAGVRVTGCNTEHHCIGGGGFFPEGNPVQCGDFASFDWDGYGTHNGYSSSRKITEAAVLLFYR.

Residues 1-18 form the signal peptide; that stretch reads MTQLGFLLFIMVATRGCS. The Fibrinogen C-terminal domain occupies 32–251; the sequence is SFFSSLPRSC…NNERAASALC (220 aa). The cysteines at positions 41 and 70 are disulfide-linked. Ca(2+) is bound by residues H86, E87, N89, G92, G97, D98, and D133. Cystine bridges form between C94–C280, C199–C259, and C251–C265. Residues N260, E262, E274, and D282 each coordinate Ca(2+). Residues 262–263 and E274 each bind a carbohydrate; that span reads EH. S298 is lipidated: GPI-anchor amidated serine. Positions 299-313 are excised as a propeptide; it reads SSRKITEAAVLLFYR.

As to quaternary structure, monomer. May interact with LTF. In terms of tissue distribution, expressed in small intestinal Paneth cells in uninfected mice. Expression also detected in various other tissues including stomach, kidney, ovary and brain.

Its subcellular location is the cell membrane. The protein localises to the secreted. Functionally, lectin that specifically recognizes microbial carbohydrate chains in a calcium-dependent manner. Binds to microbial glycans that contain a terminal acyclic 1,2-diol moiety, including beta-linked D-galactofuranose (beta-Galf), D-phosphoglycerol-modified glycans, D-glycero-D-talo-oct-2-ulosonic acid (KO) and 3-deoxy-D-manno-oct-2-ulosonic acid (KDO). Binds to glycans from Gram-positive and Gram-negative bacteria, including K.pneumoniae, S.pneumoniae, Y.pestis, P.mirabilis and P.vulgaris. Does not bind mammalian glycans. Probably plays a role in the defense system against microorganisms. May function as adipokine that has no effect on basal glucose uptake but enhances insulin-stimulated glucose uptake in adipocytes. Increases AKT phosphorylation in the absence and presence of insulin. May interact with lactoferrin/LTF and increase its uptake, and may thereby play a role in iron absorption. This chain is Intelectin-1a (Itln1), found in Mus musculus (Mouse).